The sequence spans 717 residues: Proline-rich receptor-like protein kinase PERK2 (717 aa).

Positions 1-197 (MSSAPPPGGT…GSLSPPPPAS (197 aa)) are enriched in pro residues. The interval 1–221 (MSSAPPPGGT…GSSPPAQSSK (221 aa)) is disordered. Over 1–228 (MSSAPPPGGT…SSKELSKGAM (228 aa)) the chain is Extracellular. Low complexity predominate over residues 198–220 (PSGGRSPSTPSTTPGSSPPAQSS). Residues 229–249 (VGIAIGGGFVLLVALALIFFL) traverse the membrane as a helical segment. The Cytoplasmic portion of the chain corresponds to 250–717 (CKKKRRRDNE…NIKRPGQGYG (468 aa)). Positions 258–323 (NEAPPAPIDG…YDSNYSDQSV (66 aa)) are disordered. Over residues 289-303 (VPPPKSPSSAPPRPP) the composition is skewed to pro residues. Positions 307–322 (SSGSSGDYDSNYSDQS) are enriched in low complexity. The region spanning 354–631 (FSEANLLGQG…QVARVLEGNI (278 aa)) is the Protein kinase domain. ATP is bound by residues 360–368 (LGQGGFGYV) and K382. The Proton acceptor role is filled by D478. 2 stretches are compositionally biased toward polar residues: residues 632–644 (SPSDLNQGITPGH) and 692–705 (SWSSTDGQTTQGKA). 2 disordered regions span residues 632–665 (SPSDLNQGITPGHSNVYGSSGGSTDYDSSQDNEG) and 690–717 (YPSWSSTDGQTTQGKATGNIKRPGQGYG).

It belongs to the protein kinase superfamily. Ser/Thr protein kinase family. Mostly expressed in inflorescence bolt, flower buds and siliques, and, to a lower extent, in roots, seedlings and leaves.

The protein resides in the cell membrane. It catalyses the reaction L-seryl-[protein] + ATP = O-phospho-L-seryl-[protein] + ADP + H(+). The enzyme catalyses L-threonyl-[protein] + ATP = O-phospho-L-threonyl-[protein] + ADP + H(+). The polypeptide is Proline-rich receptor-like protein kinase PERK2 (PERK2) (Arabidopsis thaliana (Mouse-ear cress)).